The following is a 273-amino-acid chain: Glutamate 5-kinase (273 aa).

Lys-15 contributes to the ATP binding site. The substrate site is built by Ser-55, Asp-142, and Asn-158. ATP-binding positions include 178–179 (SD) and 220–226 (TGGMLSK).

This sequence belongs to the glutamate 5-kinase family.

The protein localises to the cytoplasm. It catalyses the reaction L-glutamate + ATP = L-glutamyl 5-phosphate + ADP. It functions in the pathway amino-acid biosynthesis; L-proline biosynthesis; L-glutamate 5-semialdehyde from L-glutamate: step 1/2. Catalyzes the transfer of a phosphate group to glutamate to form L-glutamate 5-phosphate. This is Glutamate 5-kinase from Streptococcus pyogenes serotype M18 (strain MGAS8232).